The primary structure comprises 405 residues: GTPase Obg (405 aa).

An Obg domain is found at 1 to 159 (MKFVDEVSIF…RDLKLELKVL (159 aa)). The tract at residues 127–148 (NTRFKSSTNRAPRQTTPGKPGE) is disordered. The segment covering 129–143 (RFKSSTNRAPRQTTP) has biased composition (polar residues). In terms of domain architecture, OBG-type G spans 160–333 (ADVGLLGLPN…LCQDIMHYLD (174 aa)). Residues 166–173 (GLPNAGKS), 191–195 (FTTLV), 213–216 (DIPG), 283–286 (NKAD), and 314–316 (SAL) each bind GTP. Residues Ser173 and Thr193 each contribute to the Mg(2+) site. The segment covering 383 to 398 (ALEDEDDFDDEDDGDG) has biased composition (acidic residues). Residues 383-405 (ALEDEDDFDDEDDGDGPEIFYVR) form a disordered region.

This sequence belongs to the TRAFAC class OBG-HflX-like GTPase superfamily. OBG GTPase family. As to quaternary structure, monomer. Mg(2+) serves as cofactor.

It is found in the cytoplasm. In terms of biological role, an essential GTPase which binds GTP, GDP and possibly (p)ppGpp with moderate affinity, with high nucleotide exchange rates and a fairly low GTP hydrolysis rate. Plays a role in control of the cell cycle, stress response, ribosome biogenesis and in those bacteria that undergo differentiation, in morphogenesis control. In Azotobacter vinelandii (strain DJ / ATCC BAA-1303), this protein is GTPase Obg.